A 329-amino-acid chain; its full sequence is 4-hydroxythreonine-4-phosphate dehydrogenase (329 aa).

Residues histidine 136 and threonine 137 each contribute to the substrate site. A divalent metal cation-binding residues include histidine 166, histidine 211, and histidine 266. Substrate-binding residues include lysine 274, asparagine 283, and arginine 292.

It belongs to the PdxA family. As to quaternary structure, homodimer. Zn(2+) serves as cofactor. Requires Mg(2+) as cofactor. It depends on Co(2+) as a cofactor.

It localises to the cytoplasm. The enzyme catalyses 4-(phosphooxy)-L-threonine + NAD(+) = 3-amino-2-oxopropyl phosphate + CO2 + NADH. Its pathway is cofactor biosynthesis; pyridoxine 5'-phosphate biosynthesis; pyridoxine 5'-phosphate from D-erythrose 4-phosphate: step 4/5. Functionally, catalyzes the NAD(P)-dependent oxidation of 4-(phosphooxy)-L-threonine (HTP) into 2-amino-3-oxo-4-(phosphooxy)butyric acid which spontaneously decarboxylates to form 3-amino-2-oxopropyl phosphate (AHAP). This Salmonella typhimurium (strain LT2 / SGSC1412 / ATCC 700720) protein is 4-hydroxythreonine-4-phosphate dehydrogenase.